A 242-amino-acid chain; its full sequence is Segregation and condensation protein A (242 aa).

Belongs to the ScpA family. As to quaternary structure, component of a cohesin-like complex composed of ScpA, ScpB and the Smc homodimer, in which ScpA and ScpB bind to the head domain of Smc. The presence of the three proteins is required for the association of the complex with DNA.

It is found in the cytoplasm. Participates in chromosomal partition during cell division. May act via the formation of a condensin-like complex containing Smc and ScpB that pull DNA away from mid-cell into both cell halves. The polypeptide is Segregation and condensation protein A (Streptococcus pneumoniae serotype 4 (strain ATCC BAA-334 / TIGR4)).